Here is a 397-residue protein sequence, read N- to C-terminus: MAKAKFERTKPHVNIGTIGHIDHGKTTLTAAITKVLHDKYPDLNPFTPFEDIDKAPEERERGITISISHVEYQTESRHYAHVDCPGHADYVKNMITGAAQMDGAILVVAATDGPMPQTKEHVLLARQVGVPYIVVALNKSDMVDDEEIFDLVELEVRELLNEYEFPGDEVPVIRVSALKALEGDPEWGKKILELMEAVDQNIPEPQRDIDKPFLMPIEDVFSITGRGTVVTGRIERGVINVNDTVEIVGLKDDKITTTVTGVEMFRKLLDQGQAGDNVGLLLRGVKREEVERGQVVIKPGTTTPHTEFEAQVVILSKDEGGRHTPFFNNYRPQFYFRTTDVTGVVTLPEGTEMVMPGDNTSMTVKLIQPVAMEEGLKFAIREGGRTVGAGRVTKIIK.

The region spanning 10–206 (KPHVNIGTIG…AVDQNIPEPQ (197 aa)) is the tr-type G domain. Residues 19-26 (GHIDHGKT) form a G1 region. Position 19–26 (19–26 (GHIDHGKT)) interacts with GTP. Position 26 (T26) interacts with Mg(2+). The G2 stretch occupies residues 62–66 (GITIS). Residues 83 to 86 (DCPG) form a G3 region. GTP-binding positions include 83–87 (DCPGH) and 138–141 (NKSD). The interval 138-141 (NKSD) is G4. The tract at residues 176–178 (SAL) is G5.

The protein belongs to the TRAFAC class translation factor GTPase superfamily. Classic translation factor GTPase family. EF-Tu/EF-1A subfamily. As to quaternary structure, monomer.

It localises to the cytoplasm. It carries out the reaction GTP + H2O = GDP + phosphate + H(+). Its function is as follows. GTP hydrolase that promotes the GTP-dependent binding of aminoacyl-tRNA to the A-site of ribosomes during protein biosynthesis. This chain is Elongation factor Tu, found in Thermobifida fusca (strain YX).